The following is a 241-amino-acid chain: Uridylate kinase (241 aa).

15 to 18 (KLSG) serves as a coordination point for ATP. Positions 23 to 28 (GTEGFG) are involved in allosteric activation by GTP. Position 57 (glycine 57) interacts with UMP. ATP-binding residues include glycine 58 and arginine 62. UMP-binding positions include aspartate 77 and 138 to 145 (TGNPFFTT). Positions 165, 171, and 174 each coordinate ATP.

The protein belongs to the UMP kinase family. In terms of assembly, homohexamer.

The protein localises to the cytoplasm. The catalysed reaction is UMP + ATP = UDP + ADP. It participates in pyrimidine metabolism; CTP biosynthesis via de novo pathway; UDP from UMP (UMPK route): step 1/1. Its activity is regulated as follows. Allosterically activated by GTP. Inhibited by UTP. Catalyzes the reversible phosphorylation of UMP to UDP. The sequence is that of Uridylate kinase from Pectobacterium atrosepticum (strain SCRI 1043 / ATCC BAA-672) (Erwinia carotovora subsp. atroseptica).